The following is a 110-amino-acid chain: UPF0213 protein DVU_3309 (110 aa).

Residues 8 to 83 (EVWFVYLLRC…KRQPTDQKLA (76 aa)) enclose the GIY-YIG domain.

The protein belongs to the UPF0213 family.

The chain is UPF0213 protein DVU_3309 from Nitratidesulfovibrio vulgaris (strain ATCC 29579 / DSM 644 / CCUG 34227 / NCIMB 8303 / VKM B-1760 / Hildenborough) (Desulfovibrio vulgaris).